The sequence spans 946 residues: Protein translocase subunit SecA (946 aa).

ATP contacts are provided by residues Q90, 108 to 112 (GEGKT), and D509.

This sequence belongs to the SecA family. As to quaternary structure, monomer and homodimer. Part of the essential Sec protein translocation apparatus which comprises SecA, SecYEG and auxiliary proteins SecDF. Other proteins may also be involved.

The protein resides in the cell inner membrane. It localises to the cellular thylakoid membrane. Its subcellular location is the cytoplasm. The enzyme catalyses ATP + H2O + cellular proteinSide 1 = ADP + phosphate + cellular proteinSide 2.. In terms of biological role, part of the Sec protein translocase complex. Interacts with the SecYEG preprotein conducting channel. Has a central role in coupling the hydrolysis of ATP to the transfer of proteins into and across the cell membrane, serving as an ATP-driven molecular motor driving the stepwise translocation of polypeptide chains across the membrane. Its function is as follows. Probably participates in protein translocation into and across both the cytoplasmic and thylakoid membranes in cyanobacterial cells. The polypeptide is Protein translocase subunit SecA (Synechococcus sp. (strain RCC307)).